The sequence spans 288 residues: ATP phosphoribosyltransferase (288 aa).

This sequence belongs to the ATP phosphoribosyltransferase family. Long subfamily. The cofactor is Mg(2+).

The protein localises to the cytoplasm. It catalyses the reaction 1-(5-phospho-beta-D-ribosyl)-ATP + diphosphate = 5-phospho-alpha-D-ribose 1-diphosphate + ATP. It functions in the pathway amino-acid biosynthesis; L-histidine biosynthesis; L-histidine from 5-phospho-alpha-D-ribose 1-diphosphate: step 1/9. Feedback inhibited by histidine. Its function is as follows. Catalyzes the condensation of ATP and 5-phosphoribose 1-diphosphate to form N'-(5'-phosphoribosyl)-ATP (PR-ATP). Has a crucial role in the pathway because the rate of histidine biosynthesis seems to be controlled primarily by regulation of HisG enzymatic activity. In Methanococcus maripaludis (strain C6 / ATCC BAA-1332), this protein is ATP phosphoribosyltransferase.